The following is a 283-amino-acid chain: Polyamine aminopropyltransferase (283 aa).

Positions 5–238 (STWIDEYHKG…GIWSWTFASE (234 aa)) constitute a PABS domain. Q32 contributes to the S-methyl-5'-thioadenosine binding site. Residues H63 and D87 each coordinate spermidine. Residues E107 and 139–140 (DG) each bind S-methyl-5'-thioadenosine. Residue D158 is the Proton acceptor of the active site. Position 158–161 (158–161 (DCSD)) interacts with spermidine.

It belongs to the spermidine/spermine synthase family. As to quaternary structure, homodimer or homotetramer.

Its subcellular location is the cytoplasm. The enzyme catalyses S-adenosyl 3-(methylsulfanyl)propylamine + putrescine = S-methyl-5'-thioadenosine + spermidine + H(+). Its pathway is amine and polyamine biosynthesis; spermidine biosynthesis; spermidine from putrescine: step 1/1. Catalyzes the irreversible transfer of a propylamine group from the amino donor S-adenosylmethioninamine (decarboxy-AdoMet) to putrescine (1,4-diaminobutane) to yield spermidine. The chain is Polyamine aminopropyltransferase from Prochlorococcus marinus (strain MIT 9312).